We begin with the raw amino-acid sequence, 383 residues long: Sphingosine kinase 1 (383 aa).

Positions Pro-12 to Ser-159 constitute a DAGKc domain. ATP-binding positions include Asn-22–Arg-24 and Thr-54–Asn-58. Ser-79–Gly-82 contributes to the substrate binding site. The active-site Proton donor/acceptor is Asp-81. Residues Glu-86 and Gly-111 to Gly-113 contribute to the ATP site. Short sequence motifs (nuclear export signal) lie at residues Leu-147–Leu-155 and Arg-161–Leu-169. Substrate is bound at residue Asp-178. ATP is bound by residues Arg-185 and Arg-191. The residue at position 193 (Thr-193) is a Phosphothreonine. Ser-225 carries the phosphoserine modification. Residue Asp-340 to Glu-342 participates in ATP binding. The tract at residues Gly-363–Ile-383 is disordered. Over residues Asp-372–Ile-383 the composition is skewed to basic and acidic residues.

Interacts with ACY1. Binds to calmodulin. Interacts with SPHKAP. Interacts with CIB1, the interaction occurs in a calcium-dependent manner. Interacts with TRAF2. Interacts with EEF1A1; the interaction enhances SPHK1 kinase activity. Mg(2+) is required as a cofactor. As to expression, expressed in microglia (at protein level).

The protein resides in the cytoplasm. The protein localises to the nucleus. Its subcellular location is the cell membrane. It localises to the endosome membrane. It is found in the membrane. The protein resides in the clathrin-coated pit. The protein localises to the synapse. The enzyme catalyses a sphingoid base + ATP = a sphingoid 1-phosphate + ADP + H(+). It catalyses the reaction L-seryl-[protein] + acetyl-CoA = O-acetyl-L-seryl-[protein] + CoA. It carries out the reaction sphinganine + ATP = sphinganine 1-phosphate + ADP + H(+). The catalysed reaction is sphing-4-enine + ATP = sphing-4-enine 1-phosphate + ADP + H(+). The enzyme catalyses 1-O-hexadecyl-2-amino-sn-glycerol + ATP = 1-O-hexadecyl-2-desoxy-2-amino-sn-glycero-3-phosphate + ADP + H(+). Its activity is regulated as follows. Acetyltransferase activity increases in presence of the kinase substrate, sphingosine. In Purkinje cells, kinase activity on sphingosine increases in presence of VEGFA. In neurons, kinase activity increases during the first 24h in presence of Amyloid-beta protein 42 to decrease after 96h. Functionally, catalyzes the phosphorylation of sphingosine to form sphingosine 1-phosphate (SPP), a lipid mediator with both intra- and extracellular functions. Also acts on D-erythro-sphingosine and to a lesser extent sphinganine, but not other lipids, such as D,L-threo-dihydrosphingosine, N,N-dimethylsphingosine, diacylglycerol, ceramide, or phosphatidylinositol. In contrast to proapoptotic SPHK2, has a negative effect on intracellular ceramide levels, enhances cell growth and inhibits apoptosis. Involved in the regulation of inflammatory response and neuroinflammation. Via the product sphingosine 1-phosphate, stimulates TRAF2 E3 ubiquitin ligase activity, and promotes activation of NF-kappa-B in response to TNF signaling leading to IL17 secretion. In response to TNF and in parallel to NF-kappa-B activation, negatively regulates RANTES induction through p38 MAPK signaling pathway. Involved in endocytic membrane trafficking induced by sphingosine, recruited to dilate endosomes, also plays a role on later stages of endosomal maturation and membrane fusion independently of its kinase activity. In Purkinje cells, seems to be also involved in the regulation of autophagosome-lysosome fusion upon VEGFA. In terms of biological role, has serine acetyltransferase activity on PTGS2/COX2 in an acetyl-CoA dependent manner. The acetyltransferase activity increases in presence of the kinase substrate, sphingosine. During neuroinflammation, through PTGS2 acetylation, promotes neuronal secretion of specialized preresolving mediators (SPMs), especially 15-R-lipoxin A4, which results in an increase of phagocytic microglia. In Rattus norvegicus (Rat), this protein is Sphingosine kinase 1 (Sphk1).